A 100-amino-acid chain; its full sequence is Virion membrane protein OPG135 (100 aa).

The N-terminal stretch at 1-22 (MSCYTAILKSVGGLALFQVANG) is a signal peptide. Residues 23–45 (AIDLCRHFFMYFCEQKLRPNSFW) are Intravirion-facing. A helical transmembrane segment spans residues 46-66 (FVVVRAIASMIMYLVLGIALL). Over 67–83 (YISEQDDKKNTNNDSNS) the chain is Virion surface. Residues 75-100 (KNTNNDSNSNNDKRNVSSINSNSSHK) are disordered. N-linked (GlcNAc...) asparagine; by host glycans are attached at residues N79, N89, and N96.

It belongs to the chordopoxvirinae A9 family.

It is found in the virion membrane. The protein resides in the host cytoplasm. Functionally, envelope protein. Required for an early step in virion morphogenesis. In Monkeypox virus, this protein is Virion membrane protein OPG135 (OPG135).